The following is a 676-amino-acid chain: MEGRVKNKAPAALQISAEQILLEAYERKETPLQQTEQIADLEELAEYQGRKRQEYEGALRRNRLNTGQWMRYAQWELEQREFARARSVFERALEVNSTHVPTWIRYIQCELKEKNINHARNLLDRAVTLLPRVDKLWFTYVATEETLGNIAGCRAVFERWMHWRPPVTAWAAYVNMEKRYREFDRARGILRRYVTVHPGAPAWNKWAKFEMEAGNRDTVREVYALGIDTLVEMAHGGVDFLDESLLAGWASFETRHREYERARALYTYGLEKLPKSKSAKLYADYTAFEKQYGAKEGIENVVLTKRRSKYEDQLKEDPADYDTWFSYITLGQESGLEADQIREIFERAVSNVPPHSKRLWRRYIFLWIKYAIWEELENKEVEKAREIYKTCISIIPHKKFTFAKVWLLWAKFEIRHGNLPEARKILGRGLGMSGGKPALYKGYIALEAKLREFDRCRKLYDKYVEKFAEFAAPWMEYAELEQMLGDEERARAIFELAVSQPEMEMPELVWKRFIEFEAEEENYDRARAIYRQLLDRTHGHIKVWISFAQFEVTVPAEDQELQYNDEGEAEIEVTEEAKARARSIFGEAWDALKAANKREERVVLFESWREFEEEHGDDKSKADLDKRKPTPVKKKRKLEDGTFEEYIDYVFPTDEEDKSFSKLLENARKWKLQNQS.

HAT repeat units lie at residues 46–78 (EYQG…WELE), 80–112 (REFA…CELK), 114–146 (KNIN…TEET), 148–179 (GNIA…MEKR), 181–212 (REFD…FEME), 215–255 (NRDT…FETR), 257–291 (REYE…FEKQ), 301–333 (VVLT…LGQE), 336–369 (LEAD…LWIK), 379–415 (KEVE…FEIR), 417–449 (GNLP…LEAK), 451–483 (REFD…LEQM), 485–519 (GDEE…FEAE), 521–553 (ENYD…FEVT), 576–614 (EAKA…FEEE), and 620–652 (SKAD…YVFP). Residues 616–628 (GDDKSKADLDKRK) show a composition bias toward basic and acidic residues. Residues 616 to 636 (GDDKSKADLDKRKPTPVKKKR) form a disordered region.

Belongs to the crooked-neck family. As to quaternary structure, associated with the spliceosome.

The protein resides in the nucleus. In terms of biological role, involved in pre-mRNA splicing and cell cycle progression. Required for the spliceosome assembly and initiation of the DNA replication. The sequence is that of Pre-mRNA-splicing factor CLF1 (CLF1) from Yarrowia lipolytica (strain CLIB 122 / E 150) (Yeast).